The sequence spans 121 residues: Lysozyme (121 aa).

Residues 1–121 (KTFTRCELVQ…NKPLPDISKC (121 aa)) form the C-type lysozyme domain. Cystine bridges form between Cys-6-Cys-121, Cys-27-Cys-110, Cys-62-Cys-76, and Cys-72-Cys-90. Active-site residues include Glu-32 and Asp-50.

Belongs to the glycosyl hydrolase 22 family.

It carries out the reaction Hydrolysis of (1-&gt;4)-beta-linkages between N-acetylmuramic acid and N-acetyl-D-glucosamine residues in a peptidoglycan and between N-acetyl-D-glucosamine residues in chitodextrins.. Lysozymes have primarily a bacteriolytic function; those in tissues and body fluids are associated with the monocyte-macrophage system and enhance the activity of immunoagents. This chain is Lysozyme, found in Galleria mellonella (Greater wax moth).